A 342-amino-acid polypeptide reads, in one-letter code: Ribosomal RNA small subunit methyltransferase H (342 aa).

S-adenosyl-L-methionine is bound by residues 36 to 38, Asp56, Phe82, Asp100, and Gln107; that span reads GGH. The interval 309–342 is disordered; the sequence is ENRESGMGKGHGAAASRFPTPDSRFPTSPNGDAP. A compositionally biased stretch (polar residues) spans 333–342; it reads FPTSPNGDAP.

The protein belongs to the methyltransferase superfamily. RsmH family.

It is found in the cytoplasm. It catalyses the reaction cytidine(1402) in 16S rRNA + S-adenosyl-L-methionine = N(4)-methylcytidine(1402) in 16S rRNA + S-adenosyl-L-homocysteine + H(+). Its function is as follows. Specifically methylates the N4 position of cytidine in position 1402 (C1402) of 16S rRNA. The protein is Ribosomal RNA small subunit methyltransferase H of Xanthomonas campestris pv. campestris (strain B100).